We begin with the raw amino-acid sequence, 73 residues long: Translation initiation factor IF-1 (73 aa).

One can recognise an S1-like domain in the interval 1–72; that stretch reads MAKQDVIEME…TKGRITYRLR (72 aa).

This sequence belongs to the IF-1 family. Component of the 30S ribosomal translation pre-initiation complex which assembles on the 30S ribosome in the order IF-2 and IF-3, IF-1 and N-formylmethionyl-tRNA(fMet); mRNA recruitment can occur at any time during PIC assembly.

The protein localises to the cytoplasm. One of the essential components for the initiation of protein synthesis. Stabilizes the binding of IF-2 and IF-3 on the 30S subunit to which N-formylmethionyl-tRNA(fMet) subsequently binds. Helps modulate mRNA selection, yielding the 30S pre-initiation complex (PIC). Upon addition of the 50S ribosomal subunit IF-1, IF-2 and IF-3 are released leaving the mature 70S translation initiation complex. The protein is Translation initiation factor IF-1 of Gloeobacter violaceus (strain ATCC 29082 / PCC 7421).